The following is a 397-amino-acid chain: Penicillopepsin-1 (397 aa).

An N-terminal signal peptide occupies residues Met-1–Ala-20. A propeptide spans Ala-21–Ala-71 (activation peptide). Residues Tyr-87–Ala-394 form the Peptidase A1 domain. Residues Asp-103 and Asp-285 contribute to the active site. Asn-311 carries an N-linked (GlcNAc...) asparagine glycan. An intrachain disulfide couples Cys-322 to Cys-357.

The protein belongs to the peptidase A1 family. In terms of assembly, monomer.

The protein resides in the secreted. It carries out the reaction Hydrolysis of proteins with broad specificity similar to that of pepsin A, preferring hydrophobic residues at P1 and P1', but also cleaving 20-Gly-|-Glu-21 in the B chain of insulin. Clots milk, and activates trypsinogen.. Secreted aspartic endopeptidase that allows assimilation of proteinaceous substrates. The scissile peptide bond is attacked by a nucleophilic water molecule activated by two aspartic residues in the active site. Shows a broad primary substrate specificity. Favors hydrophobic residues at the P1 and P1' positions, but can also activate trypsinogen and hydrolyze the B chain of insulin between positions 'Gly-20' and 'Glu-21'. In Penicillium roqueforti, this protein is Penicillopepsin-1.